A 29-amino-acid polypeptide reads, in one-letter code: Trypsin inhibitor 1 (29 aa).

3 cysteine pairs are disulfide-bonded: C3–C20, C10–C22, and C16–C28.

Belongs to the protease inhibitor I7 (squash-type serine protease inhibitor) family.

It is found in the secreted. Inhibits trypsin. This Luffa aegyptiaca (Sponge gourd) protein is Trypsin inhibitor 1.